Here is a 507-residue protein sequence, read N- to C-terminus: ATP synthase subunit alpha, chloroplastic (507 aa).

Position 170–177 (170–177 (GDRQTGKT)) interacts with ATP.

The protein belongs to the ATPase alpha/beta chains family. In terms of assembly, F-type ATPases have 2 components, CF(1) - the catalytic core - and CF(0) - the membrane proton channel. CF(1) has five subunits: alpha(3), beta(3), gamma(1), delta(1), epsilon(1). CF(0) has four main subunits: a, b, b' and c.

The protein resides in the plastid. It localises to the chloroplast thylakoid membrane. It catalyses the reaction ATP + H2O + 4 H(+)(in) = ADP + phosphate + 5 H(+)(out). Produces ATP from ADP in the presence of a proton gradient across the membrane. The alpha chain is a regulatory subunit. The chain is ATP synthase subunit alpha, chloroplastic from Nicotiana sylvestris (Wood tobacco).